The sequence spans 130 residues: Methylglyoxal synthase (130 aa).

The MGS-like domain occupies Met-1–Pro-130. Substrate-binding positions include His-12, Lys-16, Thr-38–Thr-41, and Ser-58–Gly-59. Asp-64 serves as the catalytic Proton donor/acceptor. His-91 contacts substrate.

The protein belongs to the methylglyoxal synthase family.

It carries out the reaction dihydroxyacetone phosphate = methylglyoxal + phosphate. Its function is as follows. Catalyzes the formation of methylglyoxal from dihydroxyacetone phosphate. The protein is Methylglyoxal synthase of Cupriavidus pinatubonensis (strain JMP 134 / LMG 1197) (Cupriavidus necator (strain JMP 134)).